The primary structure comprises 322 residues: Ferrochelatase (322 aa).

Fe cation-binding residues include H194 and E275.

This sequence belongs to the ferrochelatase family.

The protein localises to the cytoplasm. The enzyme catalyses heme b + 2 H(+) = protoporphyrin IX + Fe(2+). Its pathway is porphyrin-containing compound metabolism; protoheme biosynthesis; protoheme from protoporphyrin-IX: step 1/1. In terms of biological role, catalyzes the ferrous insertion into protoporphyrin IX. The polypeptide is Ferrochelatase (Yersinia enterocolitica serotype O:8 / biotype 1B (strain NCTC 13174 / 8081)).